We begin with the raw amino-acid sequence, 334 residues long: Ficolin-1 (334 aa).

Residues Met-1–Pro-17 form the signal peptide. Positions Ser-47–Thr-117 are disordered. Residues Gly-50–Pro-88 enclose the Collagen-like domain. One can recognise a Fibrinogen C-terminal domain in the interval Thr-117 to Ser-334. 2 disulfide bridges follow: Cys-119–Cys-147 and Cys-126–Cys-154. The a domain; contributes to trimerization stretch occupies residues Pro-123–Gly-162. Positions Trp-163 to Thr-251 are b domain; contributes to trimerization. Asn-261 carries an N-linked (GlcNAc...) asparagine glycan. 2 residues coordinate Ca(2+): Asp-270 and Asp-272. An intrachain disulfide couples Cys-278 to Cys-291. Asn-290–His-292 serves as a coordination point for a carbohydrate. The segment at Lys-325 to Ser-334 is p domain.

The protein belongs to the ficolin lectin family. As to quaternary structure, homotrimer. Interacts with elastin/ELN. Interacts (via Fibrinogen C-terminal domain) with FFAR2. Interacts with CRP; may regulate monocyte activation by FCN1. As to expression, highly expressed in liver and spleen.

It localises to the secreted. The protein resides in the cell membrane. Its function is as follows. Extracellular lectin functioning as a pattern-recognition receptor in innate immunity. Binds the sugar moieties of pathogen-associated molecular patterns (PAMPs) displayed on microbes and activates the lectin pathway of the complement system. May also activate monocytes through a G protein-coupled receptor, FFAR2, inducing the secretion of interleukin-8/IL-8. Binds preferentially to 9-O-acetylated 2-6-linked sialic acid derivatives and to various glycans containing sialic acid engaged in a 2-3 linkage. The chain is Ficolin-1 (Fcn1) from Mus musculus (Mouse).